The chain runs to 297 residues: Bifunctional protein FolD 2 (297 aa).

NADP(+)-binding positions include 164–166 (GRS), S193, and I234.

The protein belongs to the tetrahydrofolate dehydrogenase/cyclohydrolase family. As to quaternary structure, homodimer.

It carries out the reaction (6R)-5,10-methylene-5,6,7,8-tetrahydrofolate + NADP(+) = (6R)-5,10-methenyltetrahydrofolate + NADPH. The enzyme catalyses (6R)-5,10-methenyltetrahydrofolate + H2O = (6R)-10-formyltetrahydrofolate + H(+). It participates in one-carbon metabolism; tetrahydrofolate interconversion. Functionally, catalyzes the oxidation of 5,10-methylenetetrahydrofolate to 5,10-methenyltetrahydrofolate and then the hydrolysis of 5,10-methenyltetrahydrofolate to 10-formyltetrahydrofolate. This chain is Bifunctional protein FolD 2, found in Haloarcula marismortui (strain ATCC 43049 / DSM 3752 / JCM 8966 / VKM B-1809) (Halobacterium marismortui).